Reading from the N-terminus, the 68-residue chain is DNA-directed RNA polymerase subunit omega (68 aa).

This sequence belongs to the RNA polymerase subunit omega family. The RNAP catalytic core consists of 2 alpha, 1 beta, 1 beta' and 1 omega subunit. When a sigma factor is associated with the core the holoenzyme is formed, which can initiate transcription.

The catalysed reaction is RNA(n) + a ribonucleoside 5'-triphosphate = RNA(n+1) + diphosphate. Its function is as follows. Promotes RNA polymerase assembly. Latches the N- and C-terminal regions of the beta' subunit thereby facilitating its interaction with the beta and alpha subunits. In Sulfurovum sp. (strain NBC37-1), this protein is DNA-directed RNA polymerase subunit omega.